The primary structure comprises 347 residues: tRNA pseudouridine synthase D (347 aa).

Asp-81 functions as the Nucleophile in the catalytic mechanism. The TRUD domain occupies 158 to 305; the sequence is GVPNYFGSQR…RHDRREIALK (148 aa).

It belongs to the pseudouridine synthase TruD family.

It catalyses the reaction uridine(13) in tRNA = pseudouridine(13) in tRNA. Its function is as follows. Responsible for synthesis of pseudouridine from uracil-13 in transfer RNAs. This Vibrio parahaemolyticus serotype O3:K6 (strain RIMD 2210633) protein is tRNA pseudouridine synthase D.